A 398-amino-acid polypeptide reads, in one-letter code: 1-deoxy-D-xylulose 5-phosphate reductoisomerase (398 aa).

Residues threonine 14, glycine 15, serine 16, isoleucine 17, glutamine 42, and asparagine 128 each coordinate NADPH. Lysine 129 lines the 1-deoxy-D-xylulose 5-phosphate pocket. Glutamate 130 is an NADPH binding site. Aspartate 154 is a binding site for Mn(2+). 1-deoxy-D-xylulose 5-phosphate contacts are provided by serine 155, glutamate 156, serine 185, and histidine 208. Glutamate 156 provides a ligand contact to Mn(2+). Glycine 214 contacts NADPH. Positions 221, 226, 227, and 230 each coordinate 1-deoxy-D-xylulose 5-phosphate. Glutamate 230 is a binding site for Mn(2+).

It belongs to the DXR family. Mg(2+) serves as cofactor. Mn(2+) is required as a cofactor.

It carries out the reaction 2-C-methyl-D-erythritol 4-phosphate + NADP(+) = 1-deoxy-D-xylulose 5-phosphate + NADPH + H(+). It functions in the pathway isoprenoid biosynthesis; isopentenyl diphosphate biosynthesis via DXP pathway; isopentenyl diphosphate from 1-deoxy-D-xylulose 5-phosphate: step 1/6. Functionally, catalyzes the NADPH-dependent rearrangement and reduction of 1-deoxy-D-xylulose-5-phosphate (DXP) to 2-C-methyl-D-erythritol 4-phosphate (MEP). The chain is 1-deoxy-D-xylulose 5-phosphate reductoisomerase from Dechloromonas aromatica (strain RCB).